We begin with the raw amino-acid sequence, 79 residues long: Acyl carrier protein (79 aa).

The Carrier domain occupies 2–77 (SDIEQRVKKI…QAIDYAKAHV (76 aa)). At Ser37 the chain carries O-(pantetheine 4'-phosphoryl)serine.

This sequence belongs to the acyl carrier protein (ACP) family. Post-translationally, 4'-phosphopantetheine is transferred from CoA to a specific serine of apo-ACP by AcpS. This modification is essential for activity because fatty acids are bound in thioester linkage to the sulfhydryl of the prosthetic group.

It is found in the cytoplasm. Its pathway is lipid metabolism; fatty acid biosynthesis. Carrier of the growing fatty acid chain in fatty acid biosynthesis. The chain is Acyl carrier protein from Janthinobacterium sp. (strain Marseille) (Minibacterium massiliensis).